A 519-amino-acid chain; its full sequence is MAKITRALISVSDKTGIVELSKALAGYGVEILSTGGTAKLLRESGLTVKDVSEFTGFPEMLDGRVKTLHPKVHGGLLGIRANAEHQAKMKEHGIEPIDMVVVNLYPFEATVAKPDCTLEDAIENIDIGGPTMLRSAAKNNHDVTVLVDAADYAAVLEEMAANGGAVSAKTNFRLAVKVYQHTAAYDGAISNWLGARLGENTDEYPETFTIQVKKAQDLRYGENPHQSAAFYVERGITEPCVSNAVQLQGKELSFNNIIDLDAAIETVKEFTDKPAAVIIKHTNPCGVALGDSPISAYLKARECDPVSAFGGIVGFNRIVDAAAARELTSTFLEAVIAPGYDEEALAIFTAKKNVRVMQVPLLAGHLQTGYDLKRVVGGLLLQGRDLGMVAATDCKVMSERQPTAQELAALDFAWRVCKHVKSNAIVFTNADQTVGIGAGQMSRVDSSKIAVQKALLPIKGTVLASDAFFPFRDGVDAAAEAGVTAIIQPGGSVRDEEVIQAANEHGMAMVFTNMRHFRH.

Positions 1-147 (MAKITRALIS…KNNHDVTVLV (147 aa)) constitute an MGS-like domain.

The protein belongs to the PurH family.

It catalyses the reaction (6R)-10-formyltetrahydrofolate + 5-amino-1-(5-phospho-beta-D-ribosyl)imidazole-4-carboxamide = 5-formamido-1-(5-phospho-D-ribosyl)imidazole-4-carboxamide + (6S)-5,6,7,8-tetrahydrofolate. The catalysed reaction is IMP + H2O = 5-formamido-1-(5-phospho-D-ribosyl)imidazole-4-carboxamide. The protein operates within purine metabolism; IMP biosynthesis via de novo pathway; 5-formamido-1-(5-phospho-D-ribosyl)imidazole-4-carboxamide from 5-amino-1-(5-phospho-D-ribosyl)imidazole-4-carboxamide (10-formyl THF route): step 1/1. Its pathway is purine metabolism; IMP biosynthesis via de novo pathway; IMP from 5-formamido-1-(5-phospho-D-ribosyl)imidazole-4-carboxamide: step 1/1. The protein is Bifunctional purine biosynthesis protein PurH of Trichlorobacter lovleyi (strain ATCC BAA-1151 / DSM 17278 / SZ) (Geobacter lovleyi).